Reading from the N-terminus, the 443-residue chain is Toxin YjjJ (443 aa).

D342 serves as the catalytic Proton acceptor.

The protein belongs to the HipA Ser/Thr kinase family.

Its function is as follows. Toxic when overexpressed in E.coli, leading to long filamentous cells. The toxic effect is neutralized by non-cognate antitoxin HipB. Does not seem to inhibit DNA, RNA or protein synthesis, and unlike paralogous toxin HipA its toxic activity is not counteracted by overexpression of GltX. Binds DNA. Might be a protein kinase. The sequence is that of Toxin YjjJ (yjjJ) from Escherichia coli (strain K12).